Consider the following 87-residue polypeptide: Small ribosomal subunit protein uS15 (87 aa).

It belongs to the universal ribosomal protein uS15 family. In terms of assembly, part of the 30S ribosomal subunit. Forms a bridge to the 50S subunit in the 70S ribosome, contacting the 23S rRNA.

Functionally, one of the primary rRNA binding proteins, it binds directly to 16S rRNA where it helps nucleate assembly of the platform of the 30S subunit by binding and bridging several RNA helices of the 16S rRNA. Its function is as follows. Forms an intersubunit bridge (bridge B4) with the 23S rRNA of the 50S subunit in the ribosome. This is Small ribosomal subunit protein uS15 from Dehalococcoides mccartyi (strain ATCC BAA-2100 / JCM 16839 / KCTC 5957 / BAV1).